We begin with the raw amino-acid sequence, 362 residues long: Ferredoxin--NADP reductase 1 (362 aa).

7 residues coordinate FAD: Asp-47, Gln-55, Tyr-60, Ala-100, Phe-141, Asp-309, and Ser-350.

Belongs to the ferredoxin--NADP reductase type 2 family. As to quaternary structure, homodimer. It depends on FAD as a cofactor.

The enzyme catalyses 2 reduced [2Fe-2S]-[ferredoxin] + NADP(+) + H(+) = 2 oxidized [2Fe-2S]-[ferredoxin] + NADPH. In Cupriavidus pinatubonensis (strain JMP 134 / LMG 1197) (Cupriavidus necator (strain JMP 134)), this protein is Ferredoxin--NADP reductase 1.